Consider the following 565-residue polypeptide: uncharacterized protein (565 aa).

A signal peptide spans 1–21; sequence MKIPSQQVLLALPLLASPAQS. Residues N46 and N88 are each glycosylated (N-linked (GlcNAc...) asparagine). In terms of domain architecture, FAD-binding PCMH-type spans 118-302; sequence QGIVPYYSVS…TSVTYKTHPK (185 aa). H155 carries the post-translational modification Pros-8alpha-FAD histidine. N-linked (GlcNAc...) asparagine glycans are attached at residues N191, N314, N364, N371, and N484.

This sequence belongs to the oxygen-dependent FAD-linked oxidoreductase family. FAD serves as cofactor.

The protein resides in the secreted. This is an uncharacterized protein from Arthroderma benhamiae (strain ATCC MYA-4681 / CBS 112371) (Trichophyton mentagrophytes).